Reading from the N-terminus, the 332-residue chain is MGSGYQLLQLPRERFRKTSFLVWVIILFQRAISMPLGIVTNSTLKATEIDQLVCRDKLSSTSQLKSVGLNLEGNGIATDVPSATKRWGFRSGVPPKVVSYEAGEWAENCYNLEIKKSDGSECLPLPPDGVRGFPRCRYVHKVQGTGPCPGDLAFHKNGAFFLYDRLASTVIYRGTTFAEGVVAFLILSEPKKHFWKATPAHEPVNTTDDSTSYYMTLTLSYEMSNFGGNESNTLFKVDNHTYVQLDRPHTPQFLVQLNETLRRNNRLSNSTGRLTWTLDPKIEPDVGEWAFWETKKKLFPTTSWRKLAFPNSINPHQQLLRSEPGGNCPRKN.

A signal peptide spans 1 to 33 (MGSGYQLLQLPRERFRKTSFLVWVIILFQRAIS). N-linked (GlcNAc...) asparagine; by host glycosylation occurs at N41. 2 disulfide bridges follow: C109–C136 and C122–C148. N-linked (GlcNAc...) asparagine; by host glycosylation is found at N205, N229, N239, N258, and N269.

This sequence belongs to the filoviruses glycoprotein family.

It is found in the secreted. This chain is Super small secreted glycoprotein (GP), found in Reston ebolavirus (strain Reston-89) (REBOV).